Here is a 340-residue protein sequence, read N- to C-terminus: Mitochondrial import receptor subunit TOM40 homolog 2 (340 aa).

Residues 1 to 37 form a disordered region; it reads MGNVMASTADAESSRGRGHLSAGLRLPEAPQYSGGVP.

This sequence belongs to the Tom40 family. Forms part of the preprotein translocase of the outer mitochondrial membrane (TOM complex). Interacts with mitochondrial targeting sequences. Only expressed in the male germline, detected in primary spermatocytes as well as post-meiotic stages. Not detected in stem cells and spermatogonia near the tip of the testis.

Its subcellular location is the mitochondrion outer membrane. Channel-forming protein essential for import of protein precursors into mitochondria. This is Mitochondrial import receptor subunit TOM40 homolog 2 from Drosophila melanogaster (Fruit fly).